The sequence spans 59 residues: Large ribosomal subunit protein uL30 (59 aa).

This sequence belongs to the universal ribosomal protein uL30 family. Part of the 50S ribosomal subunit.

The sequence is that of Large ribosomal subunit protein uL30 from Buchnera aphidicola subsp. Acyrthosiphon kondoi (Acyrthosiphon kondoi symbiotic bacterium).